We begin with the raw amino-acid sequence, 832 residues long: WD repeat-containing protein 75 (832 aa).

13 WD repeats span residues 4-43, 47-86, 90-131, 145-184, 193-230, 236-275, 278-317, 323-361, 375-424, 431-477, 490-528, 532-572, and 577-614; these read QCQIRVVRSGGSKLDYRRSVFSADGKYLICVSGDFIKVYS, EECIHALQGHRKLVTGIELNPKNHLQLYSCSLDGTIKLWD, GILI…QLVS, KEISVIIEDVSHLPKCTAIGRQCLYVASVKGVHLSIYYFK, LKATSKKGANNIFTVVACHPSEDCIATGHMDGRIRLWR, KEYTYTSLHWHHDSVMDLAFSAQGTKLLSGGVESVLVQWP, SEEKKEFLPRLGAAIEHISVSPHGTLYCTSHTDNKISIID, SGIIQGLLKGTVVKTGLIVDPRSNALVLNGKPGHLQFYS, QQEF…KLWE, SFVL…KVWM, SWLCDFVGGYHKNQATNCCFSEDGSLLAVSFDEIITVWE, WDLK…CCWN, and ALEWRAQLDATVLQPDPLSENIAVVSCSKRWSNLFLFQ. The segment at 764-798 is disordered; that stretch reads SQSTEESKEDEEMKSEHSEADSSDETEEMESQKRF.

As to quaternary structure, component of the proposed t-UTP subcomplex of the ribosomal small subunit (SSU) processome. SSU processome is composed of more than 70 proteins and the RNA chaperone small nucleolar RNA (snoRNA) U3.

Its subcellular location is the nucleus. The protein resides in the nucleolus. Ribosome biogenesis factor. Part of the small subunit (SSU) processome, first precursor of the small eukaryotic ribosomal subunit. During the assembly of the SSU processome in the nucleolus, many ribosome biogenesis factors, an RNA chaperone and ribosomal proteins associate with the nascent pre-rRNA and work in concert to generate RNA folding, modifications, rearrangements and cleavage as well as targeted degradation of pre-ribosomal RNA by the RNA exosome. Involved in nucleolar processing of pre-18S ribosomal RNA. Required for optimal pre-ribosomal RNA transcription by RNA polymerase I. This is WD repeat-containing protein 75 (wdr75) from Xenopus laevis (African clawed frog).